The following is a 737-amino-acid chain: 1,4-alpha-glucan branching enzyme GlgB (737 aa).

D399 serves as the catalytic Nucleophile. Residue E452 is the Proton donor of the active site.

The protein belongs to the glycosyl hydrolase 13 family. GlgB subfamily. Monomer.

The enzyme catalyses Transfers a segment of a (1-&gt;4)-alpha-D-glucan chain to a primary hydroxy group in a similar glucan chain.. Its pathway is glycan biosynthesis; glycogen biosynthesis. Its function is as follows. Catalyzes the formation of the alpha-1,6-glucosidic linkages in glycogen by scission of a 1,4-alpha-linked oligosaccharide from growing alpha-1,4-glucan chains and the subsequent attachment of the oligosaccharide to the alpha-1,6 position. The sequence is that of 1,4-alpha-glucan branching enzyme GlgB from Chlamydia muridarum (strain MoPn / Nigg).